The chain runs to 261 residues: Putative imidazole glycerol phosphate synthase subunit hisF2 (261 aa).

The active site involves Asp-138.

Belongs to the HisA/HisF family. In terms of assembly, heterodimer of HisH and HisF.

It localises to the cytoplasm. The enzyme catalyses 5-[(5-phospho-1-deoxy-D-ribulos-1-ylimino)methylamino]-1-(5-phospho-beta-D-ribosyl)imidazole-4-carboxamide + L-glutamine = D-erythro-1-(imidazol-4-yl)glycerol 3-phosphate + 5-amino-1-(5-phospho-beta-D-ribosyl)imidazole-4-carboxamide + L-glutamate + H(+). It participates in amino-acid biosynthesis; L-histidine biosynthesis; L-histidine from 5-phospho-alpha-D-ribose 1-diphosphate: step 5/9. Functionally, IGPS catalyzes the conversion of PRFAR and glutamine to IGP, AICAR and glutamate. The HisF subunit catalyzes the cyclization activity that produces IGP and AICAR from PRFAR using the ammonia provided by the HisH subunit. This Prochlorococcus marinus (strain MIT 9313) protein is Putative imidazole glycerol phosphate synthase subunit hisF2 (hisF2).